The chain runs to 264 residues: MSNSNIHTTAVIAEGAKLGKNVKIGPYCIIGPEVVLNDNVELKSHVVIEGITEIGENTVIYPFASIGQPPQILKYANERSSTIIGSNNTIREYVTVQAGSQGGGMMTRVGNNNLFMVGVHIGHDCKIGNNVVFANYVSLAGHIGVGDYAIIGGLSAVHQYARIGEYSMIGGLSPVGADVIPFGLVSSKRAVLEGLNLIGMNRKGFDKVKSLSALKAIEEIFSGEGNFAERIKQVAEKYNNNSIVIQIIDFLNQDSSRAFCRFEK.

Belongs to the transferase hexapeptide repeat family. LpxA subfamily. Homotrimer.

The protein localises to the cytoplasm. It carries out the reaction a (3R)-hydroxyacyl-[ACP] + UDP-N-acetyl-alpha-D-glucosamine = a UDP-3-O-[(3R)-3-hydroxyacyl]-N-acetyl-alpha-D-glucosamine + holo-[ACP]. It participates in glycolipid biosynthesis; lipid IV(A) biosynthesis; lipid IV(A) from (3R)-3-hydroxytetradecanoyl-[acyl-carrier-protein] and UDP-N-acetyl-alpha-D-glucosamine: step 1/6. Functionally, involved in the biosynthesis of lipid A, a phosphorylated glycolipid that anchors the lipopolysaccharide to the outer membrane of the cell. The polypeptide is Acyl-[acyl-carrier-protein]--UDP-N-acetylglucosamine O-acyltransferase (Rickettsia rickettsii).